The sequence spans 452 residues: Tripartite motif-containing protein 51G (452 aa).

The RING-type zinc finger occupies 15–56 (CPICMNYFIDPVTIDCGHSFCRPCFYLNWQDMAVLAQCSKCK). The B box-type zinc-finger motif lies at 88–129 (SEEQICGTHRETKEMFCEVDKSLLCLLCSNSQEHRNHRHCPT). Residues Cys-93, His-96, Cys-115, and His-121 each coordinate Zn(2+). The B30.2/SPRY domain occupies 269 to 452 (EFSAGPIIGL…LWPIICCSHF (184 aa)).

The protein belongs to the TRIM/RBCC family.

The polypeptide is Tripartite motif-containing protein 51G (Homo sapiens (Human)).